The sequence spans 325 residues: NADH-quinone oxidoreductase subunit H (325 aa).

The next 8 helical transmembrane spans lie at 8–28 (VIDI…VVTC), 81–101 (GIFT…FAIV), 114–134 (IGVL…LFAG), 159–179 (FLGL…LGAI), 186–206 (LWNV…GVAV), 237–257 (FFVG…TLFF), 265–285 (LPPF…FILI), and 304–324 (ICLP…LYNA).

The protein belongs to the complex I subunit 1 family. As to quaternary structure, NDH-1 is composed of 13 different subunits. Subunits NuoA, H, J, K, L, M, N constitute the membrane sector of the complex.

The protein resides in the cell inner membrane. It carries out the reaction a quinone + NADH + 5 H(+)(in) = a quinol + NAD(+) + 4 H(+)(out). Functionally, NDH-1 shuttles electrons from NADH, via FMN and iron-sulfur (Fe-S) centers, to quinones in the respiratory chain. The immediate electron acceptor for the enzyme in this species is believed to be ubiquinone. Couples the redox reaction to proton translocation (for every two electrons transferred, four hydrogen ions are translocated across the cytoplasmic membrane), and thus conserves the redox energy in a proton gradient. This subunit may bind ubiquinone. The sequence is that of NADH-quinone oxidoreductase subunit H from Sodalis glossinidius (strain morsitans).